The sequence spans 1063 residues: Structural polyprotein (1063 aa).

A disordered region spans residues 1–131; sequence MASTTPITME…LGPPTNPFQA (131 aa). Residues 30–69 form a human C1QBP/SF2P32-binding region; sequence GASQSRRPRPPRQRDSSTSGDDSGRDSGGPRRRRGNRGRG. Serine 46 carries the post-translational modification Phosphoserine; by host. Over residues 59-69 the composition is skewed to basic residues; sequence PRRRRGNRGRG. Over residues 70 to 87 the composition is skewed to basic and acidic residues; that stretch reads QRRDWSRAPPPPEERQET. The span at 93–107 shows a compositional bias: pro residues; the sequence is APKPSRAPPQQPQPP. A disulfide bond links cysteine 153 and cysteine 197. The interval 279-300 is functions as E2 signal peptide; the sequence is GAPQAFLAGLLLATVAVGTARA. Residues 301–534 lie on the Extracellular side of the membrane; it reads GLQPRADMAA…LWLATANALS (234 aa). Residues asparagine 353, asparagine 371, asparagine 410, and asparagine 429 are each glycosylated (N-linked (GlcNAc...) asparagine; by host). A helical transmembrane segment spans residues 535–555; that stretch reads LDHALAAFVLLVPWVLIFMVC. Topologically, residues 556–582 are cytoplasmic; the sequence is RRACRRRGAAAALTAVVLQGYNPPAYG. Residues 563-582 form a functions as E1 signal peptide region; sequence GAAAALTAVVLQGYNPPAYG. Topologically, residues 583–1028 are extracellular; sequence EEAFTYLCTA…QTWAEWAAAH (446 aa). 8 disulfides stabilise this stretch: cysteine 590–cysteine 595, cysteine 619–cysteine 824, cysteine 641–cysteine 653, cysteine 699–cysteine 712, cysteine 758–cysteine 767, cysteine 807–cysteine 817, cysteine 931–cysteine 934, and cysteine 950–cysteine 983. Asparagine 658 is a glycosylation site (N-linked (GlcNAc...) asparagine; by host). Residues asparagine 670 and alanine 671 each contribute to the Ca(2+) site. Residues aspartate 718 and threonine 719 each contribute to the Ca(2+) site. Residues asparagine 759 and asparagine 791 are each glycosylated (N-linked (GlcNAc...) asparagine; by host). O-linked (GalNAc...) threonine; by host glycosylation is found at threonine 1011 and threonine 1012. The chain crosses the membrane as a helical span at residues 1029–1049; sequence WWQLTLGAICALPLAGLLACC. The Extracellular segment spans residues 1050–1063; sequence AKCLYYLRGAIAPR.

As to quaternary structure, homodimer; further assembles into homooligomer. Interacts with human C1QBP. Interacts (via N-terminus) with protease/methyltransferase p150. Heterodimer with spike glycoprotein E2. In terms of assembly, heterodimer with spike glycoprotein E1. Structural polyprotein: Specific enzymatic cleavages in vivo yield mature proteins. Two signal peptidase-mediated cleavages within the polyprotein produce the structural proteins capsid, E2, and E1. The E2 signal peptide remains attached to the C-terminus of the capsid protein after cleavage by the signal peptidase. Another signal peptide at E2 C-terminus directs E1 to the ER, with a similar mechanism. In terms of processing, contains three N-linked oligosaccharides. Post-translationally, capsid is phosphorylated on Ser-46 by host. This phosphorylation negatively regulates capsid protein RNA-binding activity. Dephosphorylated by human PP1A.

Its subcellular location is the virion. The protein localises to the host cytoplasm. It is found in the host mitochondrion. It localises to the virion membrane. The protein resides in the host Golgi apparatus membrane. Its function is as follows. Capsid protein interacts with genomic RNA and assembles into icosahedric core particles 65-70 nm in diameter. The resulting nucleocapsid eventually associates with the cytoplasmic domain of E2 at the cell membrane, leading to budding and formation of mature virions from host Golgi membranes. Phosphorylation negatively regulates RNA-binding activity, possibly delaying virion assembly during the viral replication phase. Capsid protein dimerizes and becomes disulfide-linked in the virion. Modulates genomic RNA replication. Modulates subgenomic RNA synthesis by interacting with human C1QBP/SF2P32. Induces both perinuclear clustering of mitochondria and the formation of electron-dense intermitochondrial plaques, both hallmarks of rubella virus infected cells. Induces apoptosis when expressed in transfected cells. Functionally, responsible for viral attachment to target host cell, by binding to the cell receptor. Its transport to the plasma membrane depends on interaction with E1 protein. The surface glycoproteins display an irregular helical organization and a pseudo-tetrameric inner nucleocapsid arrangement. In terms of biological role, class II viral fusion protein. Fusion activity is inactive as long as E1 is bound to E2 in mature virion. After virus attachment to target cell and clathrin-mediated endocytosis, acidification of the endosome would induce dissociation of E1/E2 heterodimer and concomitant trimerization of the E1 subunits. This E1 homotrimer is fusion active, and promotes release of viral nucleocapsid in cytoplasm after endosome and viral membrane fusion. The cytoplasmic tail of spike glycoprotein E1 modulates virus release. The surface glycoproteins display an irregular helical organization and a pseudo-tetrameric inner nucleocapsid arrangement. The chain is Structural polyprotein from Rubella virus (strain Therien) (RUBV).